The chain runs to 353 residues: Photosystem II protein D1 (353 aa).

Threonine 2 bears the N-acetylthreonine mark. The residue at position 2 (threonine 2) is a Phosphothreonine. Helical transmembrane passes span 29–46, 118–133, and 142–156; these read YIGW…TATS, HFLL…EWEL, and WIAV…AATA. Residue histidine 118 participates in chlorophyll a binding. Pheophytin a is bound at residue tyrosine 126. The [CaMn4O5] cluster site is built by aspartate 170 and glutamate 189. A helical transmembrane segment spans residues 197–218; it reads FHMLGVAGVFGGSLFSAMHGSL. Residue histidine 198 participates in chlorophyll a binding. Residues histidine 215 and 264–265 each bind a quinone; that span reads SF. Histidine 215 contacts Fe cation. Histidine 272 provides a ligand contact to Fe cation. Residues 274–288 traverse the membrane as a helical segment; sequence FLAAWPVVGIWFTAL. Histidine 332, glutamate 333, aspartate 342, and alanine 344 together coordinate [CaMn4O5] cluster. A propeptide spanning residues 345 to 353 is cleaved from the precursor; the sequence is SVEAPSTNG.

This sequence belongs to the reaction center PufL/M/PsbA/D family. PSII is composed of 1 copy each of membrane proteins PsbA, PsbB, PsbC, PsbD, PsbE, PsbF, PsbH, PsbI, PsbJ, PsbK, PsbL, PsbM, PsbT, PsbX, PsbY, PsbZ, Psb30/Ycf12, at least 3 peripheral proteins of the oxygen-evolving complex and a large number of cofactors. It forms dimeric complexes. Requires The D1/D2 heterodimer binds P680, chlorophylls that are the primary electron donor of PSII, and subsequent electron acceptors. It shares a non-heme iron and each subunit binds pheophytin, quinone, additional chlorophylls, carotenoids and lipids. D1 provides most of the ligands for the Mn4-Ca-O5 cluster of the oxygen-evolving complex (OEC). There is also a Cl(-1) ion associated with D1 and D2, which is required for oxygen evolution. The PSII complex binds additional chlorophylls, carotenoids and specific lipids. as cofactor. Tyr-161 forms a radical intermediate that is referred to as redox-active TyrZ, YZ or Y-Z. Post-translationally, C-terminally processed by CTPA; processing is essential to allow assembly of the oxygen-evolving complex and thus photosynthetic growth.

Its subcellular location is the plastid. It localises to the chloroplast thylakoid membrane. It carries out the reaction 2 a plastoquinone + 4 hnu + 2 H2O = 2 a plastoquinol + O2. In terms of biological role, photosystem II (PSII) is a light-driven water:plastoquinone oxidoreductase that uses light energy to abstract electrons from H(2)O, generating O(2) and a proton gradient subsequently used for ATP formation. It consists of a core antenna complex that captures photons, and an electron transfer chain that converts photonic excitation into a charge separation. The D1/D2 (PsbA/PsbD) reaction center heterodimer binds P680, the primary electron donor of PSII as well as several subsequent electron acceptors. This is Photosystem II protein D1 from Acorus calamus (Sweet flag).